A 277-amino-acid polypeptide reads, in one-letter code: Large ribosomal subunit protein uL2 (277 aa).

The segment at 211-277 (SRWKGVRPTV…KLIVRGRKKK (67 aa)) is disordered.

Belongs to the universal ribosomal protein uL2 family. As to quaternary structure, part of the 50S ribosomal subunit. Forms a bridge to the 30S subunit in the 70S ribosome.

One of the primary rRNA binding proteins. Required for association of the 30S and 50S subunits to form the 70S ribosome, for tRNA binding and peptide bond formation. It has been suggested to have peptidyltransferase activity; this is somewhat controversial. Makes several contacts with the 16S rRNA in the 70S ribosome. The protein is Large ribosomal subunit protein uL2 of Staphylococcus epidermidis (strain ATCC 35984 / DSM 28319 / BCRC 17069 / CCUG 31568 / BM 3577 / RP62A).